A 126-amino-acid polypeptide reads, in one-letter code: Probable prefoldin subunit 4 (126 aa).

It belongs to the prefoldin subunit beta family. Heterohexamer of two PFD-alpha type and four PFD-beta type subunits.

Its function is as follows. Binds specifically to cytosolic chaperonin (c-CPN) and transfers target proteins to it. Binds to nascent polypeptide chain and promotes folding in an environment in which there are many competing pathways for nonnative proteins. This is Probable prefoldin subunit 4 (pfd-4) from Caenorhabditis elegans.